Reading from the N-terminus, the 318-residue chain is Large ribosomal subunit protein uL10 (318 aa).

Residue Tyr24 is modified to Phosphotyrosine. Thr59 is subject to Phosphothreonine. Lys264 is covalently cross-linked (Glycyl lysine isopeptide (Lys-Gly) (interchain with G-Cter in ubiquitin)). A Glycyl lysine isopeptide (Lys-Gly) (interchain with G-Cter in SUMO1); alternate cross-link involves residue Lys298. Lys298 participates in a covalent cross-link: Glycyl lysine isopeptide (Lys-Gly) (interchain with G-Cter in SUMO2); alternate. Positions 298 to 318 (KVEAKEESEESDEDMGFGLFD) are disordered. Residues 303-312 (EESEESDEDM) are compositionally biased toward acidic residues. Phosphoserine occurs at positions 305 and 308.

It belongs to the universal ribosomal protein uL10 family. P0 forms a pentameric complex by interaction with dimers of P1 and P2. Identified in a IGF2BP1-dependent mRNP granule complex containing untranslated mRNAs. Interacts with APEX1. Interacts with FMR1 isoform 6. Ubiquitinated at Lys-264 by RNF14 and RNF25 in response to ribosome collisions (ribosome stalling).

It is found in the nucleus. Its subcellular location is the cytoplasm. Its function is as follows. Ribosomal protein P0 is the functional equivalent of E.coli protein L10. The protein is Large ribosomal subunit protein uL10 (RPLP0) of Oryctolagus cuniculus (Rabbit).